Reading from the N-terminus, the 276-residue chain is Undecaprenyl-diphosphatase (276 aa).

8 consecutive transmembrane segments (helical) span residues 1-21 (MSWL…FLPV), 39-59 (AGAS…LIYF), 84-104 (YRLG…GLLF), 115-135 (LWLV…AEYY), 159-179 (LALM…LFLG), 188-208 (FGFL…LPDA), 222-242 (QLIV…AWFL), and 253-273 (FVGY…TGVL).

The protein belongs to the UppP family.

Its subcellular location is the cell membrane. The catalysed reaction is di-trans,octa-cis-undecaprenyl diphosphate + H2O = di-trans,octa-cis-undecaprenyl phosphate + phosphate + H(+). Functionally, catalyzes the dephosphorylation of undecaprenyl diphosphate (UPP). Confers resistance to bacitracin. The sequence is that of Undecaprenyl-diphosphatase from Mycolicibacterium smegmatis (strain ATCC 700084 / mc(2)155) (Mycobacterium smegmatis).